The primary structure comprises 482 residues: tRNA sulfurtransferase (482 aa).

The 105-residue stretch at 61–165 folds into the THUMP domain; that stretch reads DLVRDALTRI…DDRLLLVRGR (105 aa). Residues 183–184, Lys265, Gly287, and Gln296 each bind ATP; that span reads LI. Cys344 and Cys456 are disulfide-bonded. Residues 404-482 enclose the Rhodanese domain; sequence LAEGDVVLDI…GYDNVRVYRP (79 aa). Cys456 acts as the Cysteine persulfide intermediate in catalysis.

The protein belongs to the ThiI family.

The protein localises to the cytoplasm. It carries out the reaction [ThiI sulfur-carrier protein]-S-sulfanyl-L-cysteine + a uridine in tRNA + 2 reduced [2Fe-2S]-[ferredoxin] + ATP + H(+) = [ThiI sulfur-carrier protein]-L-cysteine + a 4-thiouridine in tRNA + 2 oxidized [2Fe-2S]-[ferredoxin] + AMP + diphosphate. The enzyme catalyses [ThiS sulfur-carrier protein]-C-terminal Gly-Gly-AMP + S-sulfanyl-L-cysteinyl-[cysteine desulfurase] + AH2 = [ThiS sulfur-carrier protein]-C-terminal-Gly-aminoethanethioate + L-cysteinyl-[cysteine desulfurase] + A + AMP + 2 H(+). Its pathway is cofactor biosynthesis; thiamine diphosphate biosynthesis. Functionally, catalyzes the ATP-dependent transfer of a sulfur to tRNA to produce 4-thiouridine in position 8 of tRNAs, which functions as a near-UV photosensor. Also catalyzes the transfer of sulfur to the sulfur carrier protein ThiS, forming ThiS-thiocarboxylate. This is a step in the synthesis of thiazole, in the thiamine biosynthesis pathway. The sulfur is donated as persulfide by IscS. The chain is tRNA sulfurtransferase from Edwardsiella ictaluri (strain 93-146).